We begin with the raw amino-acid sequence, 57 residues long: MYDTWFVLTAVVLFVLVLIGNVHGYPPWAWSGFMGSKWYNSWGPWAWRGWDDDWFDD.

An N-terminal signal peptide occupies residues 1-24; that stretch reads MYDTWFVLTAVVLFVLVLIGNVHG.

As to expression, prismatic layer of shell (at protein level).

It localises to the secreted. This is an uncharacterized protein from Margaritifera margaritifera (Freshwater pearl mussel).